The sequence spans 283 residues: MQVILAKHAGFCFGVKRATQLAFEAADTGSETYTLGPIIHSPQVVQRLEEMGVIPVEDVSEVETGGTIIIRSHGVAAEELEAAVRANLEVVDATCPFVKKAQEHVATLSKEGYDIVVVGDAVHPEVQGIVSYAAGRVYVVSSDKDVERLPRMSKIGIVAQTTQSFEHLHDVVTACLARGGETRVYNTICDATAVRQDEAKKLAGAVDCMVVIGGFNSANTKRLAQICRELLPRTHHVETACQIDEQWFKGVEKVGVTAGASTPKWIIDEVIDRISAIDKDKIS.

Cysteine 12 is a [4Fe-4S] cluster binding site. (2E)-4-hydroxy-3-methylbut-2-enyl diphosphate-binding residues include histidine 40 and histidine 73. Dimethylallyl diphosphate is bound by residues histidine 40 and histidine 73. Isopentenyl diphosphate is bound by residues histidine 40 and histidine 73. A [4Fe-4S] cluster-binding site is contributed by cysteine 95. Histidine 123 is a binding site for (2E)-4-hydroxy-3-methylbut-2-enyl diphosphate. Residue histidine 123 participates in dimethylallyl diphosphate binding. Histidine 123 serves as a coordination point for isopentenyl diphosphate. Glutamate 125 functions as the Proton donor in the catalytic mechanism. Position 161 (threonine 161) interacts with (2E)-4-hydroxy-3-methylbut-2-enyl diphosphate. Residue cysteine 189 participates in [4Fe-4S] cluster binding. The (2E)-4-hydroxy-3-methylbut-2-enyl diphosphate site is built by serine 217, asparagine 219, and serine 261. Dimethylallyl diphosphate is bound by residues serine 217, asparagine 219, and serine 261. Isopentenyl diphosphate is bound by residues serine 217, asparagine 219, and serine 261.

The protein belongs to the IspH family. The cofactor is [4Fe-4S] cluster.

The catalysed reaction is isopentenyl diphosphate + 2 oxidized [2Fe-2S]-[ferredoxin] + H2O = (2E)-4-hydroxy-3-methylbut-2-enyl diphosphate + 2 reduced [2Fe-2S]-[ferredoxin] + 2 H(+). The enzyme catalyses dimethylallyl diphosphate + 2 oxidized [2Fe-2S]-[ferredoxin] + H2O = (2E)-4-hydroxy-3-methylbut-2-enyl diphosphate + 2 reduced [2Fe-2S]-[ferredoxin] + 2 H(+). Its pathway is isoprenoid biosynthesis; dimethylallyl diphosphate biosynthesis; dimethylallyl diphosphate from (2E)-4-hydroxy-3-methylbutenyl diphosphate: step 1/1. The protein operates within isoprenoid biosynthesis; isopentenyl diphosphate biosynthesis via DXP pathway; isopentenyl diphosphate from 1-deoxy-D-xylulose 5-phosphate: step 6/6. Its function is as follows. Catalyzes the conversion of 1-hydroxy-2-methyl-2-(E)-butenyl 4-diphosphate (HMBPP) into a mixture of isopentenyl diphosphate (IPP) and dimethylallyl diphosphate (DMAPP). Acts in the terminal step of the DOXP/MEP pathway for isoprenoid precursor biosynthesis. This is 4-hydroxy-3-methylbut-2-enyl diphosphate reductase from Geobacter sp. (strain M21).